A 72-amino-acid polypeptide reads, in one-letter code: Translation initiation factor IF-1 (72 aa).

The 72-residue stretch at 1–72 folds into the S1-like domain; sequence MAKDDVIEVE…TRGRITYRFK (72 aa).

Belongs to the IF-1 family. As to quaternary structure, component of the 30S ribosomal translation pre-initiation complex which assembles on the 30S ribosome in the order IF-2 and IF-3, IF-1 and N-formylmethionyl-tRNA(fMet); mRNA recruitment can occur at any time during PIC assembly.

Its subcellular location is the cytoplasm. One of the essential components for the initiation of protein synthesis. Stabilizes the binding of IF-2 and IF-3 on the 30S subunit to which N-formylmethionyl-tRNA(fMet) subsequently binds. Helps modulate mRNA selection, yielding the 30S pre-initiation complex (PIC). Upon addition of the 50S ribosomal subunit IF-1, IF-2 and IF-3 are released leaving the mature 70S translation initiation complex. This chain is Translation initiation factor IF-1, found in Streptococcus gordonii (strain Challis / ATCC 35105 / BCRC 15272 / CH1 / DL1 / V288).